Consider the following 204-residue polypeptide: Inner membrane protein YagU (204 aa).

The Periplasmic segment spans residues 1–14; it reads MNIFEQTPPNRRRY. A helical membrane pass occupies residues 15–35; that stretch reads GLAAFIGLIAGVVSAFVKWGA. The Cytoplasmic portion of the chain corresponds to 36–100; sequence EVPLPPRSPV…VYTFAGHVFN (65 aa). The helical transmembrane segment at 101–121 threads the bilayer; it reads WVGVTHIIFSIVFAVGYCVVA. At 122-132 the chain is on the periplasmic side; that stretch reads EVFPKIKLWQG. Residues 133–153 form a helical membrane-spanning segment; it reads LLAGALAQLFVHMISFPLMGL. Over 154–204 the chain is Cytoplasmic; that stretch reads TPPLFDLPWYENVSEIFGHLVWFWSIEIIRRDLRNRITHEPDPEIPLGSNR.

In terms of assembly, homodimer.

It localises to the cell inner membrane. This Escherichia coli (strain K12) protein is Inner membrane protein YagU (yagU).